Consider the following 754-residue polypeptide: Protein tyrosine phosphatase domain-containing protein 1 (754 aa).

The Tyrosine-protein phosphatase domain occupies 82–253; that stretch reads YSSWVTDNIL…LTPLRNIFSC (172 aa). Residue C190 is the Phosphocysteine intermediate of the active site. Residues S392 and S394 each carry the phosphoserine modification. Over residues 487–498 the composition is skewed to polar residues; sequence SGAFSADVSGSH. The interval 487–554 is disordered; the sequence is SGAFSADVSG…PRSPLDCGSS (68 aa). S547 carries the post-translational modification Phosphoserine.

Belongs to the protein-tyrosine phosphatase family. Non-receptor class PTPDC1 subfamily.

Its function is as follows. May play roles in cilia formation and/or maintenance. This is Protein tyrosine phosphatase domain-containing protein 1 (PTPDC1) from Homo sapiens (Human).